The following is a 232-amino-acid chain: Orotidine 5'-phosphate decarboxylase (232 aa).

Substrate-binding positions include D14, K36, 63–72, T122, R183, Q192, G212, and R213; that span reads DLKFHDIPNT. Residue K65 is the Proton donor of the active site.

Belongs to the OMP decarboxylase family. Type 1 subfamily. As to quaternary structure, homodimer.

It carries out the reaction orotidine 5'-phosphate + H(+) = UMP + CO2. It functions in the pathway pyrimidine metabolism; UMP biosynthesis via de novo pathway; UMP from orotate: step 2/2. Catalyzes the decarboxylation of orotidine 5'-monophosphate (OMP) to uridine 5'-monophosphate (UMP). This Psychrobacter arcticus (strain DSM 17307 / VKM B-2377 / 273-4) protein is Orotidine 5'-phosphate decarboxylase.